A 671-amino-acid polypeptide reads, in one-letter code: UvrABC system protein B (671 aa).

The 388-residue stretch at 25–412 (EGIEAGLAHQ…AGRVVEQVVR (388 aa)) folds into the Helicase ATP-binding domain. Position 38–45 (38–45 (GVTGSGKT)) interacts with ATP. The short motif at 91–114 (YYDYYQPEAYVPSSDTFIEKDASI) is the Beta-hairpin element. Positions 429-582 (QVDDLLSEIT…QIAFNLANGI (154 aa)) constitute a Helicase C-terminal domain. A disordered region spans residues 601-623 (PGSRSKKRKGMAKAAEENARYEN). Over residues 614–623 (AAEENARYEN) the composition is skewed to basic and acidic residues. A UVR domain is found at 632 to 667 (TKRIRQLEEKMYQLARDLEFEAAAQMRDEITKLRER).

Belongs to the UvrB family. Forms a heterotetramer with UvrA during the search for lesions. Interacts with UvrC in an incision complex.

The protein localises to the cytoplasm. In terms of biological role, the UvrABC repair system catalyzes the recognition and processing of DNA lesions. A damage recognition complex composed of 2 UvrA and 2 UvrB subunits scans DNA for abnormalities. Upon binding of the UvrA(2)B(2) complex to a putative damaged site, the DNA wraps around one UvrB monomer. DNA wrap is dependent on ATP binding by UvrB and probably causes local melting of the DNA helix, facilitating insertion of UvrB beta-hairpin between the DNA strands. Then UvrB probes one DNA strand for the presence of a lesion. If a lesion is found the UvrA subunits dissociate and the UvrB-DNA preincision complex is formed. This complex is subsequently bound by UvrC and the second UvrB is released. If no lesion is found, the DNA wraps around the other UvrB subunit that will check the other stand for damage. In Pseudomonas fluorescens (strain ATCC BAA-477 / NRRL B-23932 / Pf-5), this protein is UvrABC system protein B.